Reading from the N-terminus, the 121-residue chain is Large ribosomal subunit protein bL12 (121 aa).

It belongs to the bacterial ribosomal protein bL12 family. Homodimer. Part of the ribosomal stalk of the 50S ribosomal subunit. Forms a multimeric L10(L12)X complex, where L10 forms an elongated spine to which 2 to 4 L12 dimers bind in a sequential fashion. Binds GTP-bound translation factors.

In terms of biological role, forms part of the ribosomal stalk which helps the ribosome interact with GTP-bound translation factors. Is thus essential for accurate translation. The protein is Large ribosomal subunit protein bL12 of Pseudomonas syringae pv. tomato (strain ATCC BAA-871 / DC3000).